Consider the following 108-residue polypeptide: Urease subunit gamma (108 aa).

It belongs to the urease gamma subunit family. In terms of assembly, heterotrimer of UreA (gamma), UreB (beta) and UreC (alpha) subunits. Three heterotrimers associate to form the active enzyme.

It localises to the cytoplasm. It catalyses the reaction urea + 2 H2O + H(+) = hydrogencarbonate + 2 NH4(+). It participates in nitrogen metabolism; urea degradation; CO(2) and NH(3) from urea (urease route): step 1/1. The polypeptide is Urease subunit gamma (Trichodesmium erythraeum (strain IMS101)).